Reading from the N-terminus, the 156-residue chain is Small ribosomal subunit protein uS7c (156 aa).

The protein belongs to the universal ribosomal protein uS7 family. As to quaternary structure, part of the 30S ribosomal subunit.

It localises to the plastid. The protein resides in the chloroplast. Its function is as follows. One of the primary rRNA binding proteins, it binds directly to 16S rRNA where it nucleates assembly of the head domain of the 30S subunit. This chain is Small ribosomal subunit protein uS7c (rps7), found in Chara vulgaris (Common stonewort).